A 367-amino-acid polypeptide reads, in one-letter code: MSKRSWWAGSRKPPREMLKLSGSDSSQSMNGLEVAPPGLITNFSLATAEQCGQETPLENMLFASFYLLDFILALVGNTLALWLFIRDHKSGTPANVFLMHLAVADLSCVLVLPTRLVYHFSGNHWPFGEIACRLTGFLFYLNMYASIYFLTCISADRFLAIVHPVKSLKLRRPLYAHLACAFLWVVVAVAMAPLLVSPQTVQTNHTVVCLQLYREKASHHALVSLAVAFTFPFITTVTCYLLIIRSLRQGLRVEKRLKTKAVRMIAIVLAIFLVCFVPYHVNRSVYVLHYRSHGASCATQRILALANRITSCLTSLNGALDPIMYFFVAEKFRHALCNLLCGKRLKGPPPSFEGKTNESSLSAKSEL.

Positions 1–28 (MSKRSWWAGSRKPPREMLKLSGSDSSQS) are disordered. Topologically, residues 1–64 (MSKRSWWAGS…TPLENMLFAS (64 aa)) are extracellular. N42 carries N-linked (GlcNAc...) asparagine glycosylation. The chain crosses the membrane as a helical span at residues 65 to 85 (FYLLDFILALVGNTLALWLFI). Residues 86 to 92 (RDHKSGT) are Cytoplasmic-facing. A helical transmembrane segment spans residues 93-113 (PANVFLMHLAVADLSCVLVLP). Residues 114-133 (TRLVYHFSGNHWPFGEIACR) are Extracellular-facing. A disulfide bridge links C132 with C209. A helical transmembrane segment spans residues 134–154 (LTGFLFYLNMYASIYFLTCIS). Residues 155–175 (ADRFLAIVHPVKSLKLRRPLY) are Cytoplasmic-facing. A helical transmembrane segment spans residues 176 to 196 (AHLACAFLWVVVAVAMAPLLV). Topologically, residues 197 to 223 (SPQTVQTNHTVVCLQLYREKASHHALV) are extracellular. N204 carries an N-linked (GlcNAc...) asparagine glycan. The helical transmembrane segment at 224–244 (SLAVAFTFPFITTVTCYLLII) threads the bilayer. The Cytoplasmic segment spans residues 245–260 (RSLRQGLRVEKRLKTK). A helical transmembrane segment spans residues 261–281 (AVRMIAIVLAIFLVCFVPYHV). N282 is a glycosylation site (N-linked (GlcNAc...) asparagine). Residues 282–308 (NRSVYVLHYRSHGASCATQRILALANR) lie on the Extracellular side of the membrane. Residues 309-329 (ITSCLTSLNGALDPIMYFFVA) traverse the membrane as a helical segment. Over 330-367 (EKFRHALCNLLCGKRLKGPPPSFEGKTNESSLSAKSEL) the chain is Cytoplasmic.

This sequence belongs to the G-protein coupled receptor 1 family. As to expression, expressed in brain, kidney, heart and umbilical vein endothelial cells. Highest level in brain.

Its subcellular location is the cell membrane. Dual specificity receptor for uracil nucleotides and cysteinyl leukotrienes (CysLTs). Signals through G(i) and inhibition of adenylyl cyclase. May mediate brain damage by nucleotides and CysLTs following ischemia. This is Uracil nucleotide/cysteinyl leukotriene receptor (GPR17) from Homo sapiens (Human).